Consider the following 288-residue polypeptide: MSKLGNRADWADDEEFDDPSALPPQQITTNKDGTKTIVSYRFNDEGKKVKVTRRIKTTVVREHVNPQVAERRSWAKFGLEKGNAPGPSFDTTSVGENIVFRPSVNWKLQAAEAEKNGGEKGSVKDQLKDKKVKCRICSGEHFTARCPFKDTMAPVDEPTAGGEAGDEDSPAAGALGAGTSSYVPPHLRKGAAGGGERMAGKYEKDDLATLRVTNVSELAEEGELRDLFERFGRVTRVFLARDRETQRAKGFAFISFADRSDAARACEKMDGFGYRHLILRVEFAKRAT.

Disordered regions lie at residues 1-33 and 156-197; these read MSKL…NKDG and DEPT…GGER. The region spanning 208 to 286 is the RRM domain; sequence ATLRVTNVSE…LILRVEFAKR (79 aa).

Belongs to the eIF-3 subunit G family. Component of the eukaryotic translation initiation factor 3 (eIF-3) complex.

The protein resides in the cytoplasm. Its function is as follows. RNA-binding component of the eukaryotic translation initiation factor 3 (eIF-3) complex, which is involved in protein synthesis of a specialized repertoire of mRNAs and, together with other initiation factors, stimulates binding of mRNA and methionyl-tRNAi to the 40S ribosome. The eIF-3 complex specifically targets and initiates translation of a subset of mRNAs involved in cell proliferation. This subunit can bind 18S rRNA. This Aspergillus niger (strain ATCC MYA-4892 / CBS 513.88 / FGSC A1513) protein is Eukaryotic translation initiation factor 3 subunit G (tif35).